Consider the following 376-residue polypeptide: tRNA-aminoacylation cofactor ARC1 (376 aa).

The tract at residues 22 to 46 (KEQSAQAAQWESVLKSGQIQPHLDQ) is interaction with methionyl-tRNA synthetase MES1. 2 interaction with glutamyl-tRNA synthetase GUS1 regions span residues 52–61 (RDNTFIVSTL) and 91–121 (TYTT…EINH). Positions 133–206 (KKKAPAGGAA…QNKAPEKPKP (74 aa)) are disordered. A compositionally biased stretch (basic and acidic residues) spans 146 to 180 (AKADEDVSKKAKKQDHPRGKPDEETLKKLREEAKA). A compositionally biased stretch (low complexity) spans 186-199 (KAANAKQQQEQQNK). Residues 205 to 307 (KPSAIDFRVG…KDSKAGDKVF (103 aa)) enclose the tRNA-binding domain.

The protein belongs to the tRNA-aminoacylation cofactor ARC1 family. Component of a yeast aminoacyl-tRNA synthase (aaRS) complex formed by methionyl-tRNA synthase MES1, glutamyl-tRNA synthase GUS1 and the tRNA aminoacylation cofactor ARC1 in a stoichiometric complex. Interacts (via N-ter) with MES1 (via N-ter) and GUS1 (via N-ter). Can also form a stable binary complex with either MES1 or GUS1 that is functional in terms of aminoacylation.

The protein localises to the cytoplasm. Binds to tRNA and functions as a cofactor for the methionyl-tRNA synthetase (MetRS) and glutamyl-tRNA synthetase (GluRS). Forms a complex with MetRS and GluRS and increases their affinity for cognate tRNAs due to the presence of a tRNA binding domain in its middle and C-terminal part. Binds specifically G4 quadruplex nucleic acid structures (these are four-stranded right-handed helices, stabilized by guanine base quartets). Also required for cytoplasmic confinement of the synthetases and tRNA. This is tRNA-aminoacylation cofactor ARC1 (ARC1) from Saccharomyces cerevisiae (strain ATCC 204508 / S288c) (Baker's yeast).